Here is a 237-residue protein sequence, read N- to C-terminus: Oligoribonuclease, mitochondrial (237 aa).

A mitochondrion-targeting transit peptide spans Met1–Gly25. The Exonuclease domain maps to Met43–Leu207. Residues Asp47 and Glu49 each coordinate Mg(2+). At Ser92 the chain carries Phosphoserine. Residue Tyr122 is modified to Phosphotyrosine. Asp147 serves as a coordination point for Mg(2+). Position 173 is an N6-acetyllysine (Lys173). The active site involves His194. Asp199 is a Mg(2+) binding site.

The protein belongs to the oligoribonuclease family. As to quaternary structure, homodimer. Homotetramer. Mn(2+) serves as cofactor. The cofactor is Mg(2+). Highly expressed in the heart and at lower levels in the lymph nodes, brain, lung, liver, spleen and thymus.

The protein resides in the mitochondrion intermembrane space. It localises to the mitochondrion matrix. It is found in the mitochondrion. The protein localises to the cytoplasm. Its subcellular location is the nucleus. Its activity is regulated as follows. Inhibited by adenosine 3',5'-bisphosphate. Its function is as follows. 3'-to-5'exoribonuclease that preferentially degrades DNA and RNA oligonucleotides composed of only two nucleotides. Binds and degrades longer oligonucleotides with a lower affinity. Plays dual roles in mitochondria, scavenging nanoRNAs (small RNA oligonucleotides of &lt;5 nucleotides) that are produced by the degradosome and clearing short RNAs that are generated by RNA processing. Essential for correct initiation of mitochondrial transcription, degrading mitochondrial RNA dinucleotides to prevent RNA-primed transcription at non-canonical sites in the mitochondrial genome. Essential for embryonic development. 3'-to-5'exoribonuclease that preferentially degrades DNA and RNA oligonucleotides composed of only two nucleotides. This Homo sapiens (Human) protein is Oligoribonuclease, mitochondrial (REXO2).